Consider the following 468-residue polypeptide: Pituitary adenylate cyclase-activating polypeptide type I receptor (468 aa).

An N-terminal signal peptide occupies residues Met-1 to Ala-20. The Extracellular segment spans residues Met-21–Ser-152. Intrachain disulfides connect Cys-34–Cys-63, Cys-54–Cys-118, and Cys-77–Cys-134. 3 N-linked (GlcNAc...) asparagine glycosylation sites follow: Asn-48, Asn-60, and Asn-117. Positions Glu-125–Tyr-139 are important for ADCYAP1/PACAP ligand binding and specificity. A helical transmembrane segment spans residues Val-153–Arg-177. The Cytoplasmic portion of the chain corresponds to Phe-178 to Phe-187. The chain crosses the membrane as a helical span at residues Ile-188–Trp-208. Over Ile-209–Thr-223 the chain is Extracellular. The helical transmembrane segment at Val-224–Leu-249 threads the bilayer. The cysteines at positions 226 and 296 are disulfide-linked. The Cytoplasmic portion of the chain corresponds to Tyr-250–Tyr-267. A helical transmembrane segment spans residues Trp-268 to Tyr-290. Over Phe-291 to Ser-302 the chain is Extracellular. Residue Asn-300 is glycosylated (N-linked (GlcNAc...) asparagine). A helical transmembrane segment spans residues Thr-303–Val-329. The Cytoplasmic portion of the chain corresponds to Ile-330–Ile-347. The chain crosses the membrane as a helical span at residues Tyr-348–Glu-374. Asn-375 carries N-linked (GlcNAc...) asparagine glycosylation. The Extracellular portion of the chain corresponds to Asn-375–Arg-379. A helical transmembrane segment spans residues Glu-380–Leu-403. The Cytoplasmic portion of the chain corresponds to Asn-404–Thr-468. Phosphoserine occurs at positions 434 and 447.

The protein belongs to the G-protein coupled receptor 2 family. Interacts with maxadilan, a vasodilator peptide from Lutzomyia longipalpis saliva; the interaction results in ADCYAP1R1 activation. As to expression, most abundant in the brain, low expression in the lung, liver, thymus, spleen, pancreas and placenta.

The protein localises to the cell membrane. With respect to regulation, several synthetic peptides derived from maxadilan, a vasodilator peptide from Lutzomyia longipalpis saliva, act as antagonists for ADCYAP1R1. In terms of biological role, g protein-coupled receptor activated by the neuropeptide pituitary adenylate cyclase-activating polypeptide (ADCYAP1/PACAP). Binds both PACAP27 and PACAP38 bioactive peptides. Ligand binding causes a conformation change that triggers signaling via guanine nucleotide-binding proteins (G proteins) and modulates the activity of downstream effectors. Activates cAMP-dependent pathway. May regulate the release of adrenocorticotropin, luteinizing hormone, growth hormone, prolactin, epinephrine, and catecholamine. May play a role in spermatogenesis and sperm motility. Causes smooth muscle relaxation and secretion in the gastrointestinal tract. The chain is Pituitary adenylate cyclase-activating polypeptide type I receptor from Homo sapiens (Human).